A 146-amino-acid chain; its full sequence is Hemoglobin subunit delta (146 aa).

A Globin domain is found at 2 to 146 (HLTGDEKSAV…VATALAHKYH (145 aa)). Residue S50 is modified to Phosphoserine. Residues H63 and H92 each contribute to the heme b site.

This sequence belongs to the globin family. As to quaternary structure, heterotetramer of two delta chains and two alpha chains. Red blood cells.

This Saimiri sciureus (Common squirrel monkey) protein is Hemoglobin subunit delta (HBD).